Reading from the N-terminus, the 103-residue chain is Large ribosomal subunit protein bL21 (103 aa).

It belongs to the bacterial ribosomal protein bL21 family. As to quaternary structure, part of the 50S ribosomal subunit. Contacts protein L20.

In terms of biological role, this protein binds to 23S rRNA in the presence of protein L20. The protein is Large ribosomal subunit protein bL21 of Haemophilus ducreyi (strain 35000HP / ATCC 700724).